A 379-amino-acid chain; its full sequence is UDP-4-amino-4-deoxy-L-arabinose--oxoglutarate aminotransferase (379 aa).

An N6-(pyridoxal phosphate)lysine modification is found at K182.

The protein belongs to the DegT/DnrJ/EryC1 family. ArnB subfamily. In terms of assembly, homodimer. Pyridoxal 5'-phosphate serves as cofactor.

The catalysed reaction is UDP-4-amino-4-deoxy-beta-L-arabinose + 2-oxoglutarate = UDP-beta-L-threo-pentopyranos-4-ulose + L-glutamate. The protein operates within nucleotide-sugar biosynthesis; UDP-4-deoxy-4-formamido-beta-L-arabinose biosynthesis; UDP-4-deoxy-4-formamido-beta-L-arabinose from UDP-alpha-D-glucuronate: step 2/3. It participates in bacterial outer membrane biogenesis; lipopolysaccharide biosynthesis. Its function is as follows. Catalyzes the conversion of UDP-4-keto-arabinose (UDP-Ara4O) to UDP-4-amino-4-deoxy-L-arabinose (UDP-L-Ara4N). The modified arabinose is attached to lipid A and is required for resistance to polymyxin and cationic antimicrobial peptides. In Salmonella dublin (strain CT_02021853), this protein is UDP-4-amino-4-deoxy-L-arabinose--oxoglutarate aminotransferase.